A 148-amino-acid polypeptide reads, in one-letter code: Protoporphyrinogen IX oxidase (148 aa).

The next 4 helical transmembrane spans lie at 7-27, 59-79, 86-106, and 128-148; these read YFLW…AALF, FIAS…LLIA, GGWL…HFYC, and FNEI…VKPF. His-15 is a heme binding site. Residue Lys-92 coordinates heme.

It belongs to the HemJ family. As to quaternary structure, homodimer. Heme b serves as cofactor.

The protein resides in the cell membrane. The catalysed reaction is protoporphyrinogen IX + 3 A = protoporphyrin IX + 3 AH2. It functions in the pathway porphyrin-containing compound metabolism; protoporphyrin-IX biosynthesis; protoporphyrin-IX from protoporphyrinogen-IX: step 1/1. Catalyzes the oxidation of protoporphyrinogen IX to protoporphyrin IX. Is involved in the biosynthesis of tetrapyrrole molecules like heme. Does not use oxygen or artificial electron acceptors such as menadione or benzoquinone. The sequence is that of Protoporphyrinogen IX oxidase from Helicobacter pylori (strain J99 / ATCC 700824) (Campylobacter pylori J99).